The following is a 357-amino-acid chain: Peptide chain release factor 1 (357 aa).

Gln-235 is subject to N5-methylglutamine.

Belongs to the prokaryotic/mitochondrial release factor family. Post-translationally, methylated by PrmC. Methylation increases the termination efficiency of RF1.

Its subcellular location is the cytoplasm. Functionally, peptide chain release factor 1 directs the termination of translation in response to the peptide chain termination codons UAG and UAA. The protein is Peptide chain release factor 1 of Alkaliphilus metalliredigens (strain QYMF).